A 254-amino-acid chain; its full sequence is DNA repair protein RecO (254 aa).

Belongs to the RecO family.

In terms of biological role, involved in DNA repair and RecF pathway recombination. This chain is DNA repair protein RecO, found in Verminephrobacter eiseniae (strain EF01-2).